Consider the following 123-residue polypeptide: Ribosome-binding factor A (123 aa).

This sequence belongs to the RbfA family. In terms of assembly, monomer. Binds 30S ribosomal subunits, but not 50S ribosomal subunits or 70S ribosomes.

It localises to the cytoplasm. In terms of biological role, one of several proteins that assist in the late maturation steps of the functional core of the 30S ribosomal subunit. Associates with free 30S ribosomal subunits (but not with 30S subunits that are part of 70S ribosomes or polysomes). Required for efficient processing of 16S rRNA. May interact with the 5'-terminal helix region of 16S rRNA. In Koribacter versatilis (strain Ellin345), this protein is Ribosome-binding factor A.